The sequence spans 231 residues: Acyltransferase PGAP2 (231 aa).

Residues 1 to 22 are Cytoplasmic-facing; that stretch reads MQQVPYGSVDRDKPLIRVPFTR. A helical transmembrane segment spans residues 23–43; it reads LAVITVCLPLLGLVACIVLAM. Topologically, residues 44-78 are lumenal; sequence LYHYNDATYTHCQVPNYLPSISAAISLTPERYIWR. Residues 79-99 traverse the membrane as a helical segment; sequence FSIGLHSAPRFLVAAAYLSFY. Residues 100-110 are Cytoplasmic-facing; it reads RGRFSRRLTEQ. Residues 111–131 form a helical membrane-spanning segment; sequence LLSGFTFLLALSENVGLLLLT. At 132 to 146 the chain is on the lumenal side; the sequence is YVSSTETYSVHKSGF. A helical membrane pass occupies residues 147-167; the sequence is ILFIGSSLFHMLCTCKLWSLI. The Cytoplasmic portion of the chain corresponds to 168-179; it reads VKYSISSEEMMS. Residues 180 to 200 form a helical membrane-spanning segment; the sequence is YWFKLRLFLFNGGCCVLAVYF. The Lumenal portion of the chain corresponds to 201 to 231; that stretch reads YRRHNTYCEEGITHASRCVSIWWCCPTWPST.

It belongs to the PGAP2 family.

It is found in the golgi apparatus membrane. Involved in the fatty acid remodeling steps of GPI-anchor maturation where the unsaturated acyl chain at sn-2 of inositol phosphate is replaced by a saturated stearoyl chain. May catalyze the second step of the fatty acid remodeling, by reacylating a lyso-GPI intermediate at sn-2 of inositol phosphate by a saturated chain. The fatty acid remodeling steps is critical for the integration of GPI-APs into lipid rafts. The chain is Acyltransferase PGAP2 from Danio rerio (Zebrafish).